A 326-amino-acid polypeptide reads, in one-letter code: Beta-ketoacyl-[acyl-carrier-protein] synthase III (326 aa).

Active-site residues include Cys-113 and His-253. Residues 254 to 258 (QANIR) form an ACP-binding region. The active site involves Asn-283.

This sequence belongs to the thiolase-like superfamily. FabH family. As to quaternary structure, homodimer.

It localises to the cytoplasm. The enzyme catalyses malonyl-[ACP] + acetyl-CoA + H(+) = 3-oxobutanoyl-[ACP] + CO2 + CoA. The protein operates within lipid metabolism; fatty acid biosynthesis. Its function is as follows. Catalyzes the condensation reaction of fatty acid synthesis by the addition to an acyl acceptor of two carbons from malonyl-ACP. Catalyzes the first condensation reaction which initiates fatty acid synthesis and may therefore play a role in governing the total rate of fatty acid production. Possesses both acetoacetyl-ACP synthase and acetyl transacylase activities. Its substrate specificity determines the biosynthesis of branched-chain and/or straight-chain of fatty acids. This is Beta-ketoacyl-[acyl-carrier-protein] synthase III from Wolbachia sp. subsp. Brugia malayi (strain TRS).